A 270-amino-acid chain; its full sequence is Catechol 1,2-dioxygenase (270 aa).

4 residues coordinate Fe cation: Tyr152, Tyr186, His210, and His212.

This sequence belongs to the intradiol ring-cleavage dioxygenase family. Fe(3+) is required as a cofactor.

It carries out the reaction catechol + O2 = cis,cis-muconate + 2 H(+). The protein is Catechol 1,2-dioxygenase (catA) of Rhodococcus opacus (Nocardia opaca).